The following is a 91-amino-acid chain: Acylphosphatase (91 aa).

The Acylphosphatase-like domain maps to 5–91 (CLHAYVGGRV…QGIAGFVVRR (87 aa)). Active-site residues include Arg-20 and Asn-38.

It belongs to the acylphosphatase family.

The catalysed reaction is an acyl phosphate + H2O = a carboxylate + phosphate + H(+). The chain is Acylphosphatase (acyP) from Pseudomonas aeruginosa (strain ATCC 15692 / DSM 22644 / CIP 104116 / JCM 14847 / LMG 12228 / 1C / PRS 101 / PAO1).